A 648-amino-acid polypeptide reads, in one-letter code: RalA-binding protein 1 (648 aa).

A disordered region spans residues 1-158 (MTECFLPPSS…KKSKDLTAAD (158 aa)). Threonine 2 is subject to N-acetylthreonine. Positions 24–33 (LTRTPSSEEI) are enriched in polar residues. Serine 29, serine 30, and serine 34 each carry phosphoserine. Phosphothreonine is present on threonine 44. Serine 48 and serine 62 each carry phosphoserine. Positions 52-68 (DVLHEPPDTVSDDDKDH) are enriched in basic and acidic residues. 69 to 74 (GKKKGK) is an ATP binding site. Basic residues predominate over residues 69-79 (GKKKGKFKKKE). Serine 92 and serine 93 each carry phosphoserine. Residues 102–118 (KVKRSKGIHVFKKPSFS) show a composition bias toward basic residues. The tract at residues 102–119 (KVKRSKGIHVFKKPSFSK) is nuclear localization signal. The segment covering 119-155 (KKKEKDFKIKEKPKEEKHKEEKHKEEKHKEKKSKDLT) has biased composition (basic and acidic residues). The tract at residues 154 to 219 (LTAADVVKQW…PAVFRECVDY (66 aa)) is mediates association with membranes and could form transmembrane domains. Positions 192–380 (VPLVDAVERT…VVLKQVTRPL (189 aa)) constitute a Rho-GAP domain. The segment at 403 to 499 (RRQEFLLNCL…LTEQEELLAM (97 aa)) is mediates interaction with RALA and RALB. Position 418 to 425 (418 to 425 (GGIKDLSK)) interacts with ATP. Phosphoserine is present on residues serine 461 and serine 463. Residues 500 to 648 (EQFLRRQIAS…PSKDRKETPI (149 aa)) form a mediates interaction with REPS1 and REPS2 region. Disordered regions lie at residues 525–552 (QSRQQHGRSETEEYSSDSESESEDEEEL) and 598–648 (RAKS…ETPI). Acidic residues predominate over residues 536–552 (EEYSSDSESESEDEEEL). Over residues 629-648 (RVAKEQAKASPSKDRKETPI) the composition is skewed to basic and acidic residues. Position 638 is a phosphoserine (serine 638).

Interacts with the GTP-bound form of RALA (via effector domain); during mitosis, recruits RALBP1 to the mitochondrion where it promotes DNM1L phosphorylation and mitochondrial fission. Interacts with DNM1L; mediates its mitotic kinase cyclin B-CDK1-mediated phosphorylation during mitosis to promote mitochondrial fission. Interacts with the mitotic kinase cyclin B-CDK1 during mitosis. Interacts with the GTP-bound form of RALB (via effector domain). Interacts with REPS1; the interaction is direct and does not affect RALA-binding nor GTPase activator activity of RALBP1. Interacts with REPS2; the interaction is direct and does not affect RALA-binding nor GTPase activator activity of RALBP1. Interacts with EPN1, NUMB and TFAP2A during interphase and mitosis. Interacts with AP2M1; as part of the AP2 complex. Interacts with CDC42. Interacts with RAC1. Post-translationally, tyrosine-phosphorylated upon stimulation of cells with EGF. In terms of processing, may undergo proteolytic cleavage to give peptides which reassemble to form a transporter complex. As to expression, ubiquitous. The highest level of expression was observed in ovaries and skeletal muscle, whereas the lowest was found in spleen, liver and peripheral blood leukocytes.

It is found in the cell membrane. It localises to the cytoplasm. Its subcellular location is the cytosol. The protein resides in the cytoskeleton. The protein localises to the spindle pole. It is found in the nucleus. It localises to the mitochondrion. It catalyses the reaction an S-substituted glutathione(in) + ATP + H2O = an S-substituted glutathione(out) + ADP + phosphate + H(+). It carries out the reaction ATP + H2O + xenobioticSide 1 = ADP + phosphate + xenobioticSide 2.. The catalysed reaction is leukotriene C4(in) + ATP + H2O = leukotriene C4(out) + ADP + phosphate + H(+). Multifunctional protein that functions as a downstream effector of RALA and RALB. As a GTPase-activating protein/GAP can inactivate CDC42 and RAC1 by stimulating their GTPase activity. As part of the Ral signaling pathway, may also regulate ligand-dependent EGF and insulin receptors-mediated endocytosis. During mitosis, may act as a scaffold protein in the phosphorylation of EPSIN/EPN1 by the mitotic kinase cyclin B-CDK1, preventing endocytosis during that phase of the cell cycle. During mitosis, also controls mitochondrial fission as an effector of RALA. Recruited to mitochondrion by RALA, acts as a scaffold to foster the mitotic kinase cyclin B-CDK1-mediated phosphorylation and activation of DNM1L. In terms of biological role, could also function as a primary ATP-dependent active transporter for glutathione conjugates of electrophiles. May also actively catalyze the efflux of a wide range of substrates including xenobiotics like doxorubicin (DOX) contributing to cell multidrug resistance. This is RalA-binding protein 1 from Mus musculus (Mouse).